Reading from the N-terminus, the 1456-residue chain is Putative 1-phosphatidylinositol-3-phosphate 5-kinase FAB1D (1456 aa).

Positions 1 to 19 (MTPSNSLSSSERSLSGECS) are enriched in low complexity. 6 disordered regions span residues 1 to 110 (MTPS…EVDG), 533 to 592 (PVSV…NDIE), 925 to 944 (ENDNKVSDSGSNGGIDTPLV), 967 to 987 (VPEDNESQTLCSSSPDTTSPI), 1003 to 1022 (NGQEADKSIPVTGESLDDEV), and 1137 to 1159 (NNQDSKQTDRDVSRFSSESTNRL). The segment covering 43–57 (ELTKEVKVDRLERKS) has biased composition (basic and acidic residues). Residues 86-110 (REDDSDDVPVWEPPEPENPEDEVDG) show a composition bias toward acidic residues. Low complexity predominate over residues 533–544 (PVSVDTDVSTTS). Positions 973 to 987 (SQTLCSSSPDTTSPI) are enriched in polar residues. Positions 1115–1443 (NNEESKKPLS…RFRKFMKTHF (329 aa)) constitute a PIPK domain. Polar residues predominate over residues 1150 to 1159 (RFSSESTNRL).

Component of the PI(3,5)P2 regulatory complex at least composed of ATG18, SAC/FIG4, FAB1 and VAC14. It depends on Mg(2+) as a cofactor. Mn(2+) serves as cofactor.

The enzyme catalyses a 1,2-diacyl-sn-glycero-3-phospho-(1D-myo-inositol-3-phosphate) + ATP = a 1,2-diacyl-sn-glycero-3-phospho-(1D-myo-inositol-3,5-bisphosphate) + ADP + H(+). The PI(3,5)P2 regulatory complex regulates both the synthesis and turnover of phosphatidylinositol 3,5-bisphosphate (PtdIns(3,5)P2). Catalyzes the phosphorylation of phosphatidylinositol 3-phosphate on the fifth hydroxyl of the myo-inositol ring, to form phosphatidylinositol 3,5-bisphosphate. This is Putative 1-phosphatidylinositol-3-phosphate 5-kinase FAB1D (FAB1D) from Arabidopsis thaliana (Mouse-ear cress).